Consider the following 462-residue polypeptide: NAD-capped RNA hydrolase NUDT12 (462 aa).

3 ANK repeats span residues 11–40 (EIVT…SLLN), 45–74 (NGWT…DRSI), and 78–98 (SRQT…ANLL). Residue Lys185 is modified to N6-succinyllysine. The Zn(2+) site is built by Cys284 and Cys287. Residue Lys292 is modified to N6-succinyllysine. 2 residues coordinate Zn(2+): Cys302 and Cys307. Substrate-binding positions include Tyr318, 354-356 (AGF), Glu370, Glu374, and Glu415. Residues 319-453 (PRVDPVVIMQ…SRAIAHQLIK (135 aa)) form the Nudix hydrolase domain. Residues Ala354, Glu370, Glu374, and Glu415 each contribute to the Mg(2+) site. The short motif at 355–376 (GFIEPGETIEDAVRREVEEESG) is the Nudix box element. A Microbody targeting signal motif is present at residues 460 to 462 (PNL).

It belongs to the Nudix hydrolase family. NudC subfamily. As to quaternary structure, homodimer. Homodimerization is essential for its catalytic activity and protein stability. Interacts (via ANK repeats) with BLMH. Requires Mg(2+) as cofactor. Zn(2+) serves as cofactor.

The protein resides in the cytoplasm. The protein localises to the peroxisome. It localises to the cytoplasmic granule. The enzyme catalyses a 5'-end NAD(+)-phospho-ribonucleoside in mRNA + H2O = a 5'-end phospho-adenosine-phospho-ribonucleoside in mRNA + beta-nicotinamide D-ribonucleotide + 2 H(+). It catalyses the reaction NAD(+) + H2O = beta-nicotinamide D-ribonucleotide + AMP + 2 H(+). It carries out the reaction NADH + H2O = reduced beta-nicotinamide D-ribonucleotide + AMP + 2 H(+). The catalysed reaction is NADPH + H2O = reduced beta-nicotinamide D-ribonucleotide + adenosine 2',5'-bisphosphate + 2 H(+). In terms of biological role, mRNA decapping enzyme that specifically removes the nicotinamide adenine dinucleotide (NAD) cap from a subset of mRNAs by hydrolyzing the diphosphate linkage to produce nicotinamide mononucleotide (NMN) and 5' monophosphate mRNA. The NAD-cap is present at the 5'-end of some RNAs; in contrast to the canonical N7 methylguanosine (m7G) cap, the NAD cap promotes mRNA decay. Preferentially acts on NAD-capped transcripts in response to nutrient stress. Also acts on free nicotinamide adenine dinucleotide molecules: hydrolyzes NAD(H) into NMN(H) and AMP, and NADPH into NMNH and 2',5'-ADP. May act to regulate the concentration of peroxisomal nicotinamide nucleotide cofactors required for oxidative metabolism in this organelle. Regulates the levels of circadian clock components PER1, PER2, PER3 and CRY2 in the liver. This is NAD-capped RNA hydrolase NUDT12 from Macaca fascicularis (Crab-eating macaque).